Here is a 30-residue protein sequence, read N- to C-terminus: Cyclotide cter-H (30 aa).

The cyclopeptide (Gly-Asp) cross-link spans 1 to 30; it reads GLPCGESCVFIPCITTVVGCSCKNKVCYND. Intrachain disulfides connect Cys-4–Cys-20, Cys-8–Cys-22, and Cys-13–Cys-27.

Contains 3 disulfide bonds. In terms of processing, this is a cyclic peptide.

Probably participates in a plant defense mechanism. This is Cyclotide cter-H from Clitoria ternatea (Butterfly pea).